We begin with the raw amino-acid sequence, 89 residues long: Small ribosomal subunit protein uS15 (89 aa).

It belongs to the universal ribosomal protein uS15 family. Part of the 30S ribosomal subunit. Forms a bridge to the 50S subunit in the 70S ribosome, contacting the 23S rRNA.

Functionally, one of the primary rRNA binding proteins, it binds directly to 16S rRNA where it helps nucleate assembly of the platform of the 30S subunit by binding and bridging several RNA helices of the 16S rRNA. In terms of biological role, forms an intersubunit bridge (bridge B4) with the 23S rRNA of the 50S subunit in the ribosome. The chain is Small ribosomal subunit protein uS15 from Hyphomonas neptunium (strain ATCC 15444).